The primary structure comprises 310 residues: Methionyl-tRNA formyltransferase (310 aa).

Residue 110–113 (SLLP) participates in (6S)-5,6,7,8-tetrahydrofolate binding.

The protein belongs to the Fmt family.

The enzyme catalyses L-methionyl-tRNA(fMet) + (6R)-10-formyltetrahydrofolate = N-formyl-L-methionyl-tRNA(fMet) + (6S)-5,6,7,8-tetrahydrofolate + H(+). Functionally, attaches a formyl group to the free amino group of methionyl-tRNA(fMet). The formyl group appears to play a dual role in the initiator identity of N-formylmethionyl-tRNA by promoting its recognition by IF2 and preventing the misappropriation of this tRNA by the elongation apparatus. The chain is Methionyl-tRNA formyltransferase from Streptomyces griseus subsp. griseus (strain JCM 4626 / CBS 651.72 / NBRC 13350 / KCC S-0626 / ISP 5235).